Consider the following 148-residue polypeptide: MRKRDRHQLIKKMITEEKLSTQKEIQDRLEAHNVCVTQTTLSRDLREIGLTKVKKNDMVYYVLVNETEKIDLVEFLSHHLEGVARAEFTLVLHTKLGEASVLANIVDVNKDEWILGTVAGANTLLVICRDQHVAKLMEDRLLDLMKDK.

This sequence belongs to the ArgR family.

It is found in the cytoplasm. It functions in the pathway amino-acid biosynthesis; L-arginine biosynthesis [regulation]. Regulates arginine biosynthesis genes. This Streptococcus pneumoniae serotype 4 (strain ATCC BAA-334 / TIGR4) protein is Arginine repressor (argR).